The primary structure comprises 124 residues: Small ribosomal subunit protein uS12 (124 aa).

Position 89 is a 3-methylthioaspartic acid (D89).

It belongs to the universal ribosomal protein uS12 family. Part of the 30S ribosomal subunit. Contacts proteins S8 and S17. May interact with IF1 in the 30S initiation complex.

In terms of biological role, with S4 and S5 plays an important role in translational accuracy. Functionally, interacts with and stabilizes bases of the 16S rRNA that are involved in tRNA selection in the A site and with the mRNA backbone. Located at the interface of the 30S and 50S subunits, it traverses the body of the 30S subunit contacting proteins on the other side and probably holding the rRNA structure together. The combined cluster of proteins S8, S12 and S17 appears to hold together the shoulder and platform of the 30S subunit. In Leptospira biflexa serovar Patoc (strain Patoc 1 / Ames), this protein is Small ribosomal subunit protein uS12.